A 76-amino-acid chain; its full sequence is Putative membrane protein insertion efficiency factor (76 aa).

This sequence belongs to the UPF0161 family.

The protein localises to the cell inner membrane. Functionally, could be involved in insertion of integral membrane proteins into the membrane. This Anaeromyxobacter dehalogenans (strain 2CP-C) protein is Putative membrane protein insertion efficiency factor.